The sequence spans 45 residues: Major cold shock protein (45 aa).

Residues 1–45 form the CSD domain; it reads EKGFGFISTENGQDVFAHFSAIQTNGFKTLEEGQKVEFDVEEGQR.

In terms of assembly, homodimer.

The protein localises to the cytoplasm. The chain is Major cold shock protein (cspA) from Streptococcus dysgalactiae.